The sequence spans 626 residues: Probable potassium transport system protein Kup (626 aa).

The next 12 helical transmembrane spans lie at 11–31, 55–75, 103–123, 140–160, 171–191, 216–236, 250–270, 282–302, 340–360, 369–389, 395–415, and 422–442; these read FLTL…TSPL, LSLI…VFVM, AWII…GMIT, AALS…LFLI, LFGP…FVSL, LGFA…ALYA, WFAV…ALLI, LLVP…ATVI, IYAP…VLAF, AYGL…LVVA, WPGL…LSFL, and LGDG…VMST.

Belongs to the HAK/KUP transporter (TC 2.A.72) family.

It localises to the cell inner membrane. The enzyme catalyses K(+)(in) + H(+)(in) = K(+)(out) + H(+)(out). Transport of potassium into the cell. Likely operates as a K(+):H(+) symporter. The polypeptide is Probable potassium transport system protein Kup (Methylococcus capsulatus (strain ATCC 33009 / NCIMB 11132 / Bath)).